The primary structure comprises 256 residues: 1-(5-phosphoribosyl)-5-[(5-phosphoribosylamino)methylideneamino] imidazole-4-carboxamide isomerase (256 aa).

D8 functions as the Proton acceptor in the catalytic mechanism. The Proton donor role is filled by D130.

It belongs to the HisA/HisF family.

The protein resides in the cytoplasm. The enzyme catalyses 1-(5-phospho-beta-D-ribosyl)-5-[(5-phospho-beta-D-ribosylamino)methylideneamino]imidazole-4-carboxamide = 5-[(5-phospho-1-deoxy-D-ribulos-1-ylimino)methylamino]-1-(5-phospho-beta-D-ribosyl)imidazole-4-carboxamide. The protein operates within amino-acid biosynthesis; L-histidine biosynthesis; L-histidine from 5-phospho-alpha-D-ribose 1-diphosphate: step 4/9. The sequence is that of 1-(5-phosphoribosyl)-5-[(5-phosphoribosylamino)methylideneamino] imidazole-4-carboxamide isomerase from Chlorobium luteolum (strain DSM 273 / BCRC 81028 / 2530) (Pelodictyon luteolum).